A 1952-amino-acid polypeptide reads, in one-letter code: Protein ROS1A (1952 aa).

Disordered stretches follow at residues 72–157 (EVVG…CRSE), 693–778 (IIRP…ESTS), 1302–1334 (HGTSNVQGDNTVRTEQNGGENSQSGYSQQDDNV), and 1367–1398 (LIENSKDDKKTSPKVPVDGSKAKRPRVGAGKK). Composition is skewed to basic residues over residues 90-102 (PARKPKKKKHRPK) and 130-139 (GKRKYVRKKT). 2 stretches are compositionally biased toward basic and acidic residues: residues 709 to 720 (PRTDNHQVKVSE) and 727 to 747 (LPEKRKVGRPRKELKPGEKPK). Positions 769–778 (TNPLQNESTS) are enriched in polar residues. Over residues 1388–1398 (AKRPRVGAGKK) the composition is skewed to basic residues. 4 residues coordinate [4Fe-4S] cluster: cysteine 1582, cysteine 1589, cysteine 1592, and cysteine 1598.

Belongs to the DNA glycosylase family. DEMETER subfamily. Requires [4Fe-4S] cluster as cofactor. Expressed in roots, leaf blades, leaf sheaths, apical and lateral shoot meristems, inflorescence meristems, lodicules, pollen grains, ovules and seeds. Expressed in vascular tissues of roots and leaves, pollen grains, pericarp, aleurone, and starchy endosperm.

The protein resides in the nucleus. Functionally, bifunctional DNA glycosylase/lyase, which excises 5-methylcytosine (5-meC) and 5-hydroxymethylcytosine (5-hmeC), leaving an apyrimidinic (AP) site that is subsequently incised by the lyase activity. DNA demethylase that is indispensable in both male and female gametophyte development. Involved in the regulation of DNA methylation in the promoters of RISBZ1/BZIP58 and DOF3/RPBF, two transcription factors that functions synergistically to positively regulate genes that are key players in the development of aleurone layers. Active DNA demethylation carried out by ROS1A in rice endosperms may restrict the number of aleurone cell layers. This is Protein ROS1A from Oryza sativa subsp. japonica (Rice).